Here is a 347-residue protein sequence, read N- to C-terminus: Dihydroorotase (347 aa).

2 residues coordinate Zn(2+): His-14 and His-16. Substrate is bound by residues 16–18 (HLR) and Asn-42. Zn(2+) is bound by residues Lys-100, His-137, and His-175. At Lys-100 the chain carries N6-carboxylysine. Residue His-137 participates in substrate binding. Residue Leu-220 coordinates substrate. A Zn(2+)-binding site is contributed by Asp-248. Asp-248 is an active-site residue. His-252 and Ala-264 together coordinate substrate.

It belongs to the metallo-dependent hydrolases superfamily. DHOase family. Class II DHOase subfamily. As to quaternary structure, homodimer. Zn(2+) is required as a cofactor.

The catalysed reaction is (S)-dihydroorotate + H2O = N-carbamoyl-L-aspartate + H(+). The protein operates within pyrimidine metabolism; UMP biosynthesis via de novo pathway; (S)-dihydroorotate from bicarbonate: step 3/3. In terms of biological role, catalyzes the reversible cyclization of carbamoyl aspartate to dihydroorotate. The chain is Dihydroorotase from Stutzerimonas stutzeri (strain A1501) (Pseudomonas stutzeri).